Reading from the N-terminus, the 244-residue chain is 15,16-dihydrobiliverdin:ferredoxin oxidoreductase (244 aa).

This sequence belongs to the HY2 family.

The catalysed reaction is 15,16-dihydrobiliverdin + oxidized 2[4Fe-4S]-[ferredoxin] = biliverdin IXalpha + reduced 2[4Fe-4S]-[ferredoxin] + 2 H(+). Catalyzes the two-electron reduction of biliverdin IX-alpha at the C15 methine bridge. The polypeptide is 15,16-dihydrobiliverdin:ferredoxin oxidoreductase (pebA) (Gloeobacter violaceus (strain ATCC 29082 / PCC 7421)).